The chain runs to 350 residues: UDP-N-acetylenolpyruvoylglucosamine reductase (350 aa).

The FAD-binding PCMH-type domain maps to 25–194 (VGPVARRLIT…LDVGGRSAPL (170 aa)). Arg166 is a catalytic residue. Ser243 (proton donor) is an active-site residue. Glu342 is an active-site residue.

Belongs to the MurB family. FAD is required as a cofactor.

It localises to the cytoplasm. It catalyses the reaction UDP-N-acetyl-alpha-D-muramate + NADP(+) = UDP-N-acetyl-3-O-(1-carboxyvinyl)-alpha-D-glucosamine + NADPH + H(+). The protein operates within cell wall biogenesis; peptidoglycan biosynthesis. Its function is as follows. Cell wall formation. The chain is UDP-N-acetylenolpyruvoylglucosamine reductase from Mycobacterium sp. (strain MCS).